A 452-amino-acid polypeptide reads, in one-letter code: MEKQYLTVTALTRYIKTKIEYDPHLQSVWLKGEISNFKYHSRGHMYFTLKDENARIAAVMFAGHNRNIKFRPENGMKVLVKGKISVYEASGSYQIYIQDMQPDGIGNLHLAYEQLKVRLEEEGLFSQVYKKIIPPYAKTIGVITSPTGAAIRDIITTIKRRYPIGNVIVFPVLVQGESAAPSIVQAIRTANEMGDIDVLIVGRGGGSIEELWAFNEEVVAREIFTSEIPIISAVGHETDFTIADFVADLRAPTPTAAAELAVPNTIELQEKVLQRTLRLQRAMRERVHKKEEKLQVLQKSYAFRYPRQVYEQKEEQLDRALEQLVLAKERYIDKKVNQLKQLSFYLEKHHPSQKIIQTKTAIETLQKQLQREMQTLLQTKEFVFVRAAQKLEVLSPLKVMMRGYGLVYDEEKQVLKSVKDVSLGDAVSVQLQDGILDCSVSSIEERELNNGK.

The protein belongs to the XseA family. In terms of assembly, heterooligomer composed of large and small subunits.

The protein resides in the cytoplasm. The catalysed reaction is Exonucleolytic cleavage in either 5'- to 3'- or 3'- to 5'-direction to yield nucleoside 5'-phosphates.. In terms of biological role, bidirectionally degrades single-stranded DNA into large acid-insoluble oligonucleotides, which are then degraded further into small acid-soluble oligonucleotides. This is Exodeoxyribonuclease 7 large subunit from Bacillus mycoides (strain KBAB4) (Bacillus weihenstephanensis).